We begin with the raw amino-acid sequence, 229 residues long: Large ribosomal subunit protein uL1 (229 aa).

It belongs to the universal ribosomal protein uL1 family. In terms of assembly, part of the 50S ribosomal subunit.

Binds directly to 23S rRNA. The L1 stalk is quite mobile in the ribosome, and is involved in E site tRNA release. Its function is as follows. Protein L1 is also a translational repressor protein, it controls the translation of the L11 operon by binding to its mRNA. The protein is Large ribosomal subunit protein uL1 of Rhodopseudomonas palustris (strain TIE-1).